The chain runs to 317 residues: 4-diphosphocytidyl-2-C-methyl-D-erythritol kinase (317 aa).

Residue K17 is part of the active site. 109–119 (PVAGGMGGGSA) is a binding site for ATP. D151 is an active-site residue.

This sequence belongs to the GHMP kinase family. IspE subfamily.

The catalysed reaction is 4-CDP-2-C-methyl-D-erythritol + ATP = 4-CDP-2-C-methyl-D-erythritol 2-phosphate + ADP + H(+). It participates in isoprenoid biosynthesis; isopentenyl diphosphate biosynthesis via DXP pathway; isopentenyl diphosphate from 1-deoxy-D-xylulose 5-phosphate: step 3/6. In terms of biological role, catalyzes the phosphorylation of the position 2 hydroxy group of 4-diphosphocytidyl-2C-methyl-D-erythritol. The chain is 4-diphosphocytidyl-2-C-methyl-D-erythritol kinase from Paenarthrobacter aurescens (strain TC1).